We begin with the raw amino-acid sequence, 143 residues long: uncharacterized protein (143 aa).

Positions 1–14 (MPAAKKQIEEKPEV) are enriched in basic and acidic residues. The interval 1 to 25 (MPAAKKQIEEKPEVEQDLGAPDFSD) is disordered.

This is an uncharacterized protein from Pseudoalteromonas phage PM2 (Bacteriophage PM2).